The following is a 296-amino-acid chain: Undecaprenyl-diphosphatase (296 aa).

A run of 7 helical transmembrane segments spans residues 48-68 (SAFT…AWVF), 104-124 (LTLW…LLFD), 131-151 (LFSV…MIFA), 167-187 (ITFF…WPGF), 208-228 (SDFT…LSLV), 237-257 (SHIP…LLSI), and 272-292 (FAIY…GFGI).

It belongs to the UppP family.

The protein localises to the cell membrane. The enzyme catalyses di-trans,octa-cis-undecaprenyl diphosphate + H2O = di-trans,octa-cis-undecaprenyl phosphate + phosphate + H(+). Catalyzes the dephosphorylation of undecaprenyl diphosphate (UPP). Confers resistance to bacitracin. This chain is Undecaprenyl-diphosphatase, found in Staphylococcus carnosus (strain TM300).